We begin with the raw amino-acid sequence, 95 residues long: Small ribosomal subunit protein bS6 (95 aa).

It belongs to the bacterial ribosomal protein bS6 family.

In terms of biological role, binds together with bS18 to 16S ribosomal RNA. The sequence is that of Small ribosomal subunit protein bS6 from Geobacillus sp. (strain WCH70).